Consider the following 324-residue polypeptide: MCGPTATTVANAGTGGETIKGLPPGLKKPPWLRQRAPSGERFDYLSESLTGLKLNTVCEEAMCPNVGECWNGDTGTATVMLLGDTCTRGCRFCAVNTSQTPPPPDENEPENTAHAIAEWGVGYIVLTSVDRDDIPDGGSEHFARTVRTLKTIKSSVLVEALTPDFQGDMNAVAHLARSGLDVFAHNVETVERLQKRVRDPRANYEQSLAVLRHAKASKEGLVTKTSIMLGLGEEDEEIKQCMRACKEAGVDIFTLGQYLQPTPQHLPVKEFVTPEKFDFWKAYGEEVIGFRYVASGPLVRSSYKAGEFFIESMLRKDALDRGET.

2 stretches are compositionally biased toward low complexity: residues 1–12 (MCGPTATTVANA) and 20–29 (KGLPPGLKKP). Residues 1–30 (MCGPTATTVANAGTGGETIKGLPPGLKKPP) form a disordered region. The [4Fe-4S] cluster site is built by cysteine 58, cysteine 63, cysteine 69, cysteine 86, cysteine 90, cysteine 93, and serine 302. Positions 72–291 (GDTGTATVML…AYGEEVIGFR (220 aa)) constitute a Radical SAM core domain.

It belongs to the radical SAM superfamily. Lipoyl synthase family. [4Fe-4S] cluster serves as cofactor.

The protein resides in the plastid. It is found in the chloroplast. It catalyses the reaction [[Fe-S] cluster scaffold protein carrying a second [4Fe-4S](2+) cluster] + N(6)-octanoyl-L-lysyl-[protein] + 2 oxidized [2Fe-2S]-[ferredoxin] + 2 S-adenosyl-L-methionine + 4 H(+) = [[Fe-S] cluster scaffold protein] + N(6)-[(R)-dihydrolipoyl]-L-lysyl-[protein] + 4 Fe(3+) + 2 hydrogen sulfide + 2 5'-deoxyadenosine + 2 L-methionine + 2 reduced [2Fe-2S]-[ferredoxin]. Its pathway is protein modification; protein lipoylation via endogenous pathway; protein N(6)-(lipoyl)lysine from octanoyl-[acyl-carrier-protein]: step 2/2. Catalyzes the radical-mediated insertion of two sulfur atoms into the C-6 and C-8 positions of the octanoyl moiety bound to the lipoyl domains of lipoate-dependent enzymes, thereby converting the octanoylated domains into lipoylated derivatives. The chain is Lipoyl synthase, chloroplastic from Ostreococcus lucimarinus (strain CCE9901).